Consider the following 1184-residue polypeptide: DNA-directed RNA polymerase subunit beta' (1184 aa).

Residues Cys60, Cys62, Cys75, and Cys78 each coordinate Zn(2+). Mg(2+) is bound by residues Asp449, Asp451, and Asp453. Cys794, Cys867, Cys874, and Cys877 together coordinate Zn(2+). The segment at 1165-1184 (NDQQERQDKEKEETEVKASN) is disordered.

The protein belongs to the RNA polymerase beta' chain family. The RNAP catalytic core consists of 2 alpha, 1 beta, 1 beta' and 1 omega subunit. When a sigma factor is associated with the core the holoenzyme is formed, which can initiate transcription. It depends on Mg(2+) as a cofactor. Zn(2+) is required as a cofactor.

It catalyses the reaction RNA(n) + a ribonucleoside 5'-triphosphate = RNA(n+1) + diphosphate. Functionally, DNA-dependent RNA polymerase catalyzes the transcription of DNA into RNA using the four ribonucleoside triphosphates as substrates. The chain is DNA-directed RNA polymerase subunit beta' from Thermoanaerobacter pseudethanolicus (strain ATCC 33223 / 39E) (Clostridium thermohydrosulfuricum).